A 338-amino-acid polypeptide reads, in one-letter code: Uroporphyrinogen decarboxylase (338 aa).

Substrate contacts are provided by residues 25–29 (RQAGR), phenylalanine 44, aspartate 75, tyrosine 146, serine 201, and histidine 314.

Belongs to the uroporphyrinogen decarboxylase family. As to quaternary structure, homodimer.

Its subcellular location is the cytoplasm. The catalysed reaction is uroporphyrinogen III + 4 H(+) = coproporphyrinogen III + 4 CO2. Its pathway is porphyrin-containing compound metabolism; protoporphyrin-IX biosynthesis; coproporphyrinogen-III from 5-aminolevulinate: step 4/4. Catalyzes the decarboxylation of four acetate groups of uroporphyrinogen-III to yield coproporphyrinogen-III. In Aquifex aeolicus (strain VF5), this protein is Uroporphyrinogen decarboxylase.